A 370-amino-acid chain; its full sequence is tRNA-specific 2-thiouridylase MnmA (370 aa).

ATP is bound by residues 8–15 (GMSGGVDS) and M34. Positions 104-106 (NPD) are interaction with target base in tRNA. Catalysis depends on C109, which acts as the Nucleophile. Cysteines 109 and 202 form a disulfide. Position 134 (G134) interacts with ATP. The segment at 152–154 (KDQ) is interaction with tRNA. Catalysis depends on C202, which acts as the Cysteine persulfide intermediate. The tract at residues 309-310 (RY) is interaction with tRNA.

The protein belongs to the MnmA/TRMU family.

It localises to the cytoplasm. The catalysed reaction is S-sulfanyl-L-cysteinyl-[protein] + uridine(34) in tRNA + AH2 + ATP = 2-thiouridine(34) in tRNA + L-cysteinyl-[protein] + A + AMP + diphosphate + H(+). Functionally, catalyzes the 2-thiolation of uridine at the wobble position (U34) of tRNA, leading to the formation of s(2)U34. In Metamycoplasma arthritidis (strain 158L3-1) (Mycoplasma arthritidis), this protein is tRNA-specific 2-thiouridylase MnmA.